A 395-amino-acid polypeptide reads, in one-letter code: DNA primase small subunit PriS (395 aa).

Residues D95, D97, and D302 contribute to the active site.

This sequence belongs to the eukaryotic-type primase small subunit family. Heterodimer of a small subunit (PriS) and a large subunit (PriL). The cofactor is Mg(2+). Mn(2+) serves as cofactor.

Its function is as follows. Catalytic subunit of DNA primase, an RNA polymerase that catalyzes the synthesis of short RNA molecules used as primers for DNA polymerase during DNA replication. The small subunit contains the primase catalytic core and has DNA synthesis activity on its own. Binding to the large subunit stabilizes and modulates the activity, increasing the rate of DNA synthesis while decreasing the length of the DNA fragments, and conferring RNA synthesis capability. The DNA polymerase activity may enable DNA primase to also catalyze primer extension after primer synthesis. May also play a role in DNA repair. In Methanothrix thermoacetophila (strain DSM 6194 / JCM 14653 / NBRC 101360 / PT) (Methanosaeta thermophila), this protein is DNA primase small subunit PriS.